A 281-amino-acid polypeptide reads, in one-letter code: Tryptophan 2,3-dioxygenase (281 aa).

Residues 50–54 (FIIQH), Tyr-112, and Arg-116 contribute to the substrate site. His-239 is a binding site for heme. Residue Thr-253 participates in substrate binding.

It belongs to the tryptophan 2,3-dioxygenase family. As to quaternary structure, homotetramer. The cofactor is heme.

It carries out the reaction L-tryptophan + O2 = N-formyl-L-kynurenine. Its pathway is amino-acid degradation; L-tryptophan degradation via kynurenine pathway; L-kynurenine from L-tryptophan: step 1/2. In terms of biological role, heme-dependent dioxygenase that catalyzes the oxidative cleavage of the L-tryptophan (L-Trp) pyrrole ring and converts L-tryptophan to N-formyl-L-kynurenine. Catalyzes the oxidative cleavage of the indole moiety. This chain is Tryptophan 2,3-dioxygenase, found in Saccharopolyspora erythraea (strain ATCC 11635 / DSM 40517 / JCM 4748 / NBRC 13426 / NCIMB 8594 / NRRL 2338).